We begin with the raw amino-acid sequence, 193 residues long: MRLILLGPPGAGKGTQSERLREQCKIPQLSTGDMLRAAVKAGTPIGLKAKAVMDAGGLVSDDIVVGIVADRIEEPDARNGFILDGFPRTVKQAEALTTMLHEKKMDLDAVIELVVDENALLARIEKRAKETLAAGGTVRADDNPAAFKTRIDTYREQTAPVSAYYASQGVLKTVDGMADIDTVTAAIDKILKA.

10-15 (GAGKGT) serves as a coordination point for ATP. The tract at residues 30 to 59 (STGDMLRAAVKAGTPIGLKAKAVMDAGGLV) is NMP. Residues Thr31, Arg36, 57 to 59 (GLV), 85 to 88 (GFPR), and Gln92 contribute to the AMP site. Residues 126 to 142 (KRAKETLAAGGTVRADD) are LID. Arg127 is a binding site for ATP. The AMP site is built by Arg139 and Arg150. Ala178 contributes to the ATP binding site.

The protein belongs to the adenylate kinase family. As to quaternary structure, monomer.

Its subcellular location is the cytoplasm. It catalyses the reaction AMP + ATP = 2 ADP. It functions in the pathway purine metabolism; AMP biosynthesis via salvage pathway; AMP from ADP: step 1/1. Its function is as follows. Catalyzes the reversible transfer of the terminal phosphate group between ATP and AMP. Plays an important role in cellular energy homeostasis and in adenine nucleotide metabolism. This is Adenylate kinase from Beijerinckia indica subsp. indica (strain ATCC 9039 / DSM 1715 / NCIMB 8712).